We begin with the raw amino-acid sequence, 357 residues long: Actin, macronuclear (357 aa).

The protein belongs to the actin family. Post-translationally, met-1 may be removed after translation.

Its subcellular location is the cytoplasm. The protein localises to the cytoskeleton. The enzyme catalyses ATP + H2O = ADP + phosphate + H(+). In terms of biological role, actins are highly conserved proteins that are involved in various types of cell motility and are ubiquitously expressed in all eukaryotic cells. The sequence is that of Actin, macronuclear from Oxytricha fallax.